The primary structure comprises 155 residues: Regulatory protein RecX (155 aa).

Belongs to the RecX family.

It is found in the cytoplasm. Functionally, modulates RecA activity. This is Regulatory protein RecX from Vibrio campbellii (strain ATCC BAA-1116).